A 249-amino-acid polypeptide reads, in one-letter code: tRNA pseudouridine synthase A (249 aa).

Asp53 (nucleophile) is an active-site residue. Residue Tyr111 participates in substrate binding.

It belongs to the tRNA pseudouridine synthase TruA family. In terms of assembly, homodimer.

It carries out the reaction uridine(38/39/40) in tRNA = pseudouridine(38/39/40) in tRNA. Functionally, formation of pseudouridine at positions 38, 39 and 40 in the anticodon stem and loop of transfer RNAs. This chain is tRNA pseudouridine synthase A, found in Streptococcus suis (strain 05ZYH33).